Here is an 865-residue protein sequence, read N- to C-terminus: AP-1 complex subunit gamma-1 (865 aa).

Positions 665-690 are disordered; the sequence is AEPLETPVDEMTQSPQSSLSRAPSTS. A compositionally biased stretch (polar residues) spans 675–690; the sequence is MTQSPQSSLSRAPSTS. Positions 746 to 860 constitute a GAE domain; the sequence is KSYPPIVVFD…LDQVDFGKLP (115 aa).

The protein belongs to the adaptor complexes large subunit family. Adaptor protein complex 1 (AP-1) is a heterotetramer composed of two large adaptins (gamma-type subunit apl4 and beta-type subunit apl2), a medium adaptin (mu-type subunit apm1) and a small adaptin (sigma-type subunit aps1). AP-1 interacts with clathrin.

The protein resides in the cytoplasmic vesicle. It is found in the clathrin-coated vesicle membrane. The protein localises to the golgi apparatus. Functionally, adaptins are components of the adaptor complexes which link clathrin to receptors in coated vesicles. Clathrin-associated protein complexes are believed to interact with the cytoplasmic tails of membrane proteins, leading to their selection and concentration. The AP-1 complex interacts directly with clathrin. The chain is AP-1 complex subunit gamma-1 (apl4) from Schizosaccharomyces pombe (strain 972 / ATCC 24843) (Fission yeast).